A 436-amino-acid polypeptide reads, in one-letter code: ATP-dependent protease ATPase subunit HslU (436 aa).

Residues Ile-19, 61 to 65, Asp-249, Glu-314, and Arg-386 contribute to the ATP site; that span reads GVGKT.

The protein belongs to the ClpX chaperone family. HslU subfamily. A double ring-shaped homohexamer of HslV is capped on each side by a ring-shaped HslU homohexamer. The assembly of the HslU/HslV complex is dependent on binding of ATP.

It localises to the cytoplasm. Its function is as follows. ATPase subunit of a proteasome-like degradation complex; this subunit has chaperone activity. The binding of ATP and its subsequent hydrolysis by HslU are essential for unfolding of protein substrates subsequently hydrolyzed by HslV. HslU recognizes the N-terminal part of its protein substrates and unfolds these before they are guided to HslV for hydrolysis. This Bartonella henselae (strain ATCC 49882 / DSM 28221 / CCUG 30454 / Houston 1) (Rochalimaea henselae) protein is ATP-dependent protease ATPase subunit HslU.